Here is a 354-residue protein sequence, read N- to C-terminus: Uroporphyrinogen decarboxylase (354 aa).

Substrate is bound by residues 27–31 (RQAGR), D77, Y154, T209, and H327.

The protein belongs to the uroporphyrinogen decarboxylase family. Homodimer.

Its subcellular location is the cytoplasm. The enzyme catalyses uroporphyrinogen III + 4 H(+) = coproporphyrinogen III + 4 CO2. It participates in porphyrin-containing compound metabolism; protoporphyrin-IX biosynthesis; coproporphyrinogen-III from 5-aminolevulinate: step 4/4. Its function is as follows. Catalyzes the decarboxylation of four acetate groups of uroporphyrinogen-III to yield coproporphyrinogen-III. The chain is Uroporphyrinogen decarboxylase from Shigella flexneri serotype 5b (strain 8401).